A 379-amino-acid polypeptide reads, in one-letter code: Chaperone protein DnaJ (379 aa).

A J domain is found at 7 to 72 (CYYETLEVER…DKRAAYDRYG (66 aa)). Residues 135 to 213 (GKTAQIEIPV…CTGSGRVTKE (79 aa)) form a CR-type zinc finger. Zn(2+) is bound by residues Cys148, Cys151, Cys165, Cys168, Cys187, Cys190, Cys201, and Cys204. 4 CXXCXGXG motif repeats span residues 148-155 (CEACSGTG), 165-172 (CSTCGGAG), 187-194 (CPSCQGRG), and 201-208 (CPSCTGSG).

It belongs to the DnaJ family. Homodimer. Zn(2+) serves as cofactor.

The protein resides in the cytoplasm. Functionally, participates actively in the response to hyperosmotic and heat shock by preventing the aggregation of stress-denatured proteins and by disaggregating proteins, also in an autonomous, DnaK-independent fashion. Unfolded proteins bind initially to DnaJ; upon interaction with the DnaJ-bound protein, DnaK hydrolyzes its bound ATP, resulting in the formation of a stable complex. GrpE releases ADP from DnaK; ATP binding to DnaK triggers the release of the substrate protein, thus completing the reaction cycle. Several rounds of ATP-dependent interactions between DnaJ, DnaK and GrpE are required for fully efficient folding. Also involved, together with DnaK and GrpE, in the DNA replication of plasmids through activation of initiation proteins. In Rhodopseudomonas palustris (strain ATCC BAA-98 / CGA009), this protein is Chaperone protein DnaJ.